The primary structure comprises 468 residues: Glutamate--tRNA ligase (468 aa).

Residues 9-19 (PSPTGYLHVGG) carry the 'HIGH' region motif. Cys-98, Cys-100, Cys-125, and Asp-127 together coordinate Zn(2+). A 'KMSKS' region motif is present at residues 235–239 (KLSKR). Lys-238 is an ATP binding site.

Belongs to the class-I aminoacyl-tRNA synthetase family. Glutamate--tRNA ligase type 1 subfamily. Monomer. Requires Zn(2+) as cofactor.

The protein resides in the cytoplasm. The enzyme catalyses tRNA(Glu) + L-glutamate + ATP = L-glutamyl-tRNA(Glu) + AMP + diphosphate. In terms of biological role, catalyzes the attachment of glutamate to tRNA(Glu) in a two-step reaction: glutamate is first activated by ATP to form Glu-AMP and then transferred to the acceptor end of tRNA(Glu). In Idiomarina loihiensis (strain ATCC BAA-735 / DSM 15497 / L2-TR), this protein is Glutamate--tRNA ligase.